The following is a 294-amino-acid chain: Acetylglutamate kinase (294 aa).

Residues 67–68 (GG), Arg89, and Asn191 each bind substrate.

Belongs to the acetylglutamate kinase family. ArgB subfamily.

The protein resides in the cytoplasm. The enzyme catalyses N-acetyl-L-glutamate + ATP = N-acetyl-L-glutamyl 5-phosphate + ADP. The protein operates within amino-acid biosynthesis; L-arginine biosynthesis; N(2)-acetyl-L-ornithine from L-glutamate: step 2/4. Its function is as follows. Catalyzes the ATP-dependent phosphorylation of N-acetyl-L-glutamate. The sequence is that of Acetylglutamate kinase from Methylobacillus flagellatus (strain ATCC 51484 / DSM 6875 / VKM B-1610 / KT).